A 190-amino-acid chain; its full sequence is Peptidyl-tRNA hydrolase (190 aa).

A tRNA-binding site is contributed by F14. H19 (proton acceptor) is an active-site residue. Positions 64, 66, and 112 each coordinate tRNA.

Belongs to the PTH family. In terms of assembly, monomer.

The protein resides in the cytoplasm. The enzyme catalyses an N-acyl-L-alpha-aminoacyl-tRNA + H2O = an N-acyl-L-amino acid + a tRNA + H(+). Functionally, hydrolyzes ribosome-free peptidyl-tRNAs (with 1 or more amino acids incorporated), which drop off the ribosome during protein synthesis, or as a result of ribosome stalling. Catalyzes the release of premature peptidyl moieties from peptidyl-tRNA molecules trapped in stalled 50S ribosomal subunits, and thus maintains levels of free tRNAs and 50S ribosomes. The chain is Peptidyl-tRNA hydrolase from Staphylococcus aureus (strain Mu3 / ATCC 700698).